The chain runs to 192 residues: T-cell surface glycoprotein CD3 epsilon chain (192 aa).

The N-terminal stretch at 1 to 21 is a signal peptide; the sequence is MQTGNLWQVLGLCLLLVGAWA. At 22-111 the chain is on the extracellular side; that stretch reads QDDTEQNPYE…RVCKNCMEVN (90 aa). The Ig-like domain maps to 27–98; that stretch reads QNPYEVSISG…GNTEAAHTLY (72 aa). Residues Cys-43 and Cys-84 are joined by a disulfide bond. Residues 112–137 traverse the membrane as a helical segment; that stretch reads LLEVATIIVVDICVTLGLLLLVYYWS. At 138–192 the chain is on the cytoplasmic side; sequence KSRKAKATPMTRGAGAGGRPRGQNRERPPPVPNPDYEPIRKGQRDLYSGLNQRGV. The interval 146-192 is disordered; the sequence is PMTRGAGAGGRPRGQNRERPPPVPNPDYEPIRKGQRDLYSGLNQRGV. Residues 160-177 form an NUMB-binding region region; sequence QNRERPPPVPNPDYEPIR. An ITAM domain is found at 163–190; sequence ERPPPVPNPDYEPIRKGQRDLYSGLNQR. Residues 164-171 form a proline-rich sequence region; it reads RPPPVPNP. Tyr-173 and Tyr-184 each carry phosphotyrosine.

In terms of assembly, the TCR-CD3 complex is composed of a CD3D/CD3E and a CD3G/CD3E heterodimers that preferentially associate with TCRalpha and TCRbeta, respectively, to form TCRalpha/CD3E/CD3G and TCRbeta/CD3G/CD3E trimers. In turn, the hexamer interacts with CD3Z homodimer to form the TCR-CD3 complex. Alternatively, TCRalpha and TCRbeta can be replaced by TCRgamma and TCRdelta. Interacts with CD6. Interacts (via Proline-rich sequence) with NCK1; the interaction is ligand dependent but independent of tyrosine kinase activation. In terms of processing, phosphorylated on Tyr residues after T-cell receptor triggering by LCK in association with CD4/CD8.

Its subcellular location is the cell membrane. In terms of biological role, part of the TCR-CD3 complex present on T-lymphocyte cell surface that plays an essential role in adaptive immune response. When antigen presenting cells (APCs) activate T-cell receptor (TCR), TCR-mediated signals are transmitted across the cell membrane by the CD3 chains CD3D, CD3E, CD3G and CD3Z. All CD3 chains contain immunoreceptor tyrosine-based activation motifs (ITAMs) in their cytoplasmic domain. Upon TCR engagement, these motifs become phosphorylated by Src family protein tyrosine kinases LCK and FYN, resulting in the activation of downstream signaling pathways. In addition of this role of signal transduction in T-cell activation, CD3E plays an essential role in correct T-cell development. Also participates in internalization and cell surface down-regulation of TCR-CD3 complexes via endocytosis sequences present in CD3E cytosolic region. In addition to its role as a TCR coreceptor, it serves as a receptor for ITPRIPL1. Ligand recognition inhibits T-cell activation by promoting interaction with NCK1, which prevents CD3E-ZAP70 interaction and blocks the ERK-NFkB signaling cascade and calcium influx. This chain is T-cell surface glycoprotein CD3 epsilon chain (CD3E), found in Ovis aries (Sheep).